A 635-amino-acid polypeptide reads, in one-letter code: Threonine--tRNA ligase (635 aa).

The TGS domain occupies 1-61 (MINISFPDGS…DNDCKLRILT (61 aa)). A catalytic region spans residues 242–533 (DHRKLGRELD…LIEEYAGRFP (292 aa)). C333, H384, and H510 together coordinate Zn(2+).

It belongs to the class-II aminoacyl-tRNA synthetase family. In terms of assembly, homodimer. It depends on Zn(2+) as a cofactor.

The protein localises to the cytoplasm. The catalysed reaction is tRNA(Thr) + L-threonine + ATP = L-threonyl-tRNA(Thr) + AMP + diphosphate + H(+). Functionally, catalyzes the attachment of threonine to tRNA(Thr) in a two-step reaction: L-threonine is first activated by ATP to form Thr-AMP and then transferred to the acceptor end of tRNA(Thr). Also edits incorrectly charged L-seryl-tRNA(Thr). The sequence is that of Threonine--tRNA ligase from Rickettsia peacockii (strain Rustic).